Consider the following 294-residue polypeptide: Probable cobalamin biosynthesis protein CobD (294 aa).

4 consecutive transmembrane segments (helical) span residues 52–72 (AGLL…IVPF), 73–93 (YAPF…SFAI), 145–165 (DSVV…AVIY), and 268–288 (IYWL…ATGV).

It belongs to the CobD/CbiB family.

The protein localises to the cell membrane. The protein operates within cofactor biosynthesis; adenosylcobalamin biosynthesis. Functionally, converts cobyric acid to cobinamide by the addition of aminopropanol on the F carboxylic group. In Thermococcus kodakarensis (strain ATCC BAA-918 / JCM 12380 / KOD1) (Pyrococcus kodakaraensis (strain KOD1)), this protein is Probable cobalamin biosynthesis protein CobD.